The primary structure comprises 198 residues: Integrator complex subunit 8-like protein (198 aa).

Belongs to the Integrator subunit 8 family. Component of the Integrator complex. The core complex associates with protein phosphatase 2A subunits, to form the Integrator-PP2A (INTAC) complex.

The protein resides in the nucleus. It is found in the chromosome. Component of the integrator complex, a multiprotein complex that terminates RNA polymerase II (Pol II) transcription in the promoter-proximal region of genes. The integrator complex provides a quality checkpoint during transcription elongation by driving premature transcription termination of transcripts that are unfavorably configured for transcriptional elongation: the complex terminates transcription by (1) catalyzing dephosphorylation of the C-terminal domain (CTD) of Pol II subunit polr2a, (2) degrading the exiting nascent RNA transcript via endonuclease activity and (3) promoting the release of Pol II from bound DNA. The integrator complex is also involved in terminating the synthesis of non-coding Pol II transcripts, such as enhancer RNAs (eRNAs), small nuclear RNAs (snRNAs), telomerase RNAs and long non-coding RNAs (lncRNAs). Within the integrator complex, INTS8 is required for the recruitment of protein phosphatase 2A (PP2A) to transcription pause-release checkpoint. The chain is Integrator complex subunit 8-like protein from Dictyostelium discoideum (Social amoeba).